Here is a 277-residue protein sequence, read N- to C-terminus: Type II restriction enzyme EcoRI (277 aa).

Residues D91, E111, and K113 contribute to the active site. Mg(2+) contacts are provided by D91 and E111.

It belongs to the EcoRI type II restriction endonuclease family. Homodimer. It depends on Mg(2+) as a cofactor.

It catalyses the reaction Endonucleolytic cleavage of DNA to give specific double-stranded fragments with terminal 5'-phosphates.. Its function is as follows. A P subtype restriction enzyme that recognizes the double-stranded sequence 5'-GAATTC-3' and cleaves after G-1. This Escherichia coli protein is Type II restriction enzyme EcoRI (ecoRIR).